The following is a 58-amino-acid chain: Small ribosomal subunit protein bS21 (58 aa).

A disordered region spans residues 36–58 (RHHETPVEKYKRKLQQRRRSRRR). Basic residues predominate over residues 45–58 (YKRKLQQRRRSRRR).

This sequence belongs to the bacterial ribosomal protein bS21 family.

This chain is Small ribosomal subunit protein bS21, found in Prochlorococcus marinus (strain NATL1A).